A 179-amino-acid chain; its full sequence is Ribosomal RNA small subunit methyltransferase G (179 aa).

S-adenosyl-L-methionine-binding positions include glycine 54, phenylalanine 59, 105–106 (IE), and arginine 121.

This sequence belongs to the methyltransferase superfamily. RNA methyltransferase RsmG family.

It is found in the cytoplasm. The enzyme catalyses guanosine(527) in 16S rRNA + S-adenosyl-L-methionine = N(7)-methylguanosine(527) in 16S rRNA + S-adenosyl-L-homocysteine. Specifically methylates the N7 position of guanine in position 527 of 16S rRNA. This is Ribosomal RNA small subunit methyltransferase G from Helicobacter bizzozeronii.